We begin with the raw amino-acid sequence, 164 residues long: Pheromone-binding protein 2 (164 aa).

A signal peptide spans 1 to 22 (MIRKVLLSVLLAVLMTINLGQA). Cystine bridges form between cysteine 41-cysteine 76, cysteine 72-cysteine 130, and cysteine 119-cysteine 139.

It belongs to the PBP/GOBP family. As to expression, antenna.

In terms of biological role, this major soluble protein in olfactory sensilla of male moths might serve to solubilize the extremely hydrophobic pheromone molecules and to transport pheromone through the aqueous lymph to receptors located on olfactory cilia. The protein is Pheromone-binding protein 2 of Antheraea pernyi (Chinese oak silk moth).